A 371-amino-acid chain; its full sequence is F-box protein At2g41170 (371 aa).

The F-box domain occupies K56–H102.

The polypeptide is F-box protein At2g41170 (Arabidopsis thaliana (Mouse-ear cress)).